The chain runs to 207 residues: UPF0126 inner membrane protein YadS (207 aa).

Residues 1-21 (MLVYWLDIVGTAVFAISGVLL) traverse the membrane as a helical segment. Residues 22–29 (AGKLRMDP) are Cytoplasmic-facing. Residues 30–50 (FGVLVLGVVTAVGGGTIRDMA) form a helical membrane-spanning segment. At 51–58 (LDHGPVFW) the chain is on the periplasmic side. A helical membrane pass occupies residues 59–79 (VKDPTDLVVAMVTSMLTIVLV). The Cytoplasmic portion of the chain corresponds to 80–85 (RQPRRL). Residues 86–106 (PKWMLPVLDAVGLAVFVGIGV) traverse the membrane as a helical segment. The Periplasmic segment spans residues 107-112 (NKAFNA). A helical membrane pass occupies residues 113–133 (EAGPLIAVCMGVITGVGGGII). Residues 134-148 (RDVLAREIPMILRTE) lie on the Cytoplasmic side of the membrane. Residues 149 to 169 (IYATACIIGGIVHATAYYTFS) form a helical membrane-spanning segment. Residue Val170 is a topological domain, periplasmic. A helical membrane pass occupies residues 171–191 (PLETASMMGMVVTLLIRLAAI). Residues 192–207 (RWHLKLPTFALDENGR) are Cytoplasmic-facing.

It belongs to the UPF0126 family.

The protein resides in the cell inner membrane. The protein is UPF0126 inner membrane protein YadS (yadS) of Escherichia coli O6:H1 (strain CFT073 / ATCC 700928 / UPEC).